Here is a 181-residue protein sequence, read N- to C-terminus: ATP synthase subunit delta (181 aa).

The protein belongs to the ATPase delta chain family. F-type ATPases have 2 components, F(1) - the catalytic core - and F(0) - the membrane proton channel. F(1) has five subunits: alpha(3), beta(3), gamma(1), delta(1), epsilon(1). F(0) has three main subunits: a(1), b(2) and c(10-14). The alpha and beta chains form an alternating ring which encloses part of the gamma chain. F(1) is attached to F(0) by a central stalk formed by the gamma and epsilon chains, while a peripheral stalk is formed by the delta and b chains.

The protein resides in the cell inner membrane. Functionally, f(1)F(0) ATP synthase produces ATP from ADP in the presence of a proton or sodium gradient. F-type ATPases consist of two structural domains, F(1) containing the extramembraneous catalytic core and F(0) containing the membrane proton channel, linked together by a central stalk and a peripheral stalk. During catalysis, ATP synthesis in the catalytic domain of F(1) is coupled via a rotary mechanism of the central stalk subunits to proton translocation. In terms of biological role, this protein is part of the stalk that links CF(0) to CF(1). It either transmits conformational changes from CF(0) to CF(1) or is implicated in proton conduction. This Chlorobaculum parvum (strain DSM 263 / NCIMB 8327) (Chlorobium vibrioforme subsp. thiosulfatophilum) protein is ATP synthase subunit delta.